We begin with the raw amino-acid sequence, 316 residues long: BTB/POZ domain-containing adapter for CUL3-mediated RhoA degradation protein 2 (316 aa).

In terms of domain architecture, BTB spans 28–96 (KYVQLNVGGS…LRDDTITLPQ (69 aa)). Residues 268–279 (EATSRSRSQASP) are compositionally biased toward polar residues. The tract at residues 268–287 (EATSRSRSQASPSEDEETFE) is disordered. S278 carries the post-translational modification Phosphoserine. S280 is subject to Phosphoserine; by CK2.

The protein belongs to the BACURD family. Component of the BCR(TNFAIP1) E3 ubiquitin ligase complex, at least composed of CUL3, TNFAIP1/BACURD2 and RBX1. Interacts with RHOA; with a preference for RhoA-GDP. Interacts with RHOB. Interacts with PCNA. Interacts with CSNK2B. In terms of processing, phosphorylation at Ser-280 by CK2 facilitates the nucleus localization and increases interaction with PCNA.

The protein resides in the cytoplasm. It localises to the nucleus. It is found in the endosome. It participates in protein modification; protein ubiquitination. Functionally, substrate-specific adapter of a BCR (BTB-CUL3-RBX1) E3 ubiquitin-protein ligase complex involved in regulation of cytoskeleton structure. The BCR(TNFAIP1) E3 ubiquitin ligase complex mediates the ubiquitination of RHOA, leading to its degradation by the proteasome, thereby regulating the actin cytoskeleton and cell migration. Its interaction with RHOB may regulate apoptosis. May enhance the PCNA-dependent DNA polymerase delta activity. This chain is BTB/POZ domain-containing adapter for CUL3-mediated RhoA degradation protein 2 (TNFAIP1), found in Homo sapiens (Human).